Consider the following 122-residue polypeptide: Large ribosomal subunit protein uL18 (122 aa).

The protein belongs to the universal ribosomal protein uL18 family. In terms of assembly, part of the 50S ribosomal subunit; part of the 5S rRNA/L5/L18/L25 subcomplex. Contacts the 5S and 23S rRNAs.

This is one of the proteins that bind and probably mediate the attachment of the 5S RNA into the large ribosomal subunit, where it forms part of the central protuberance. This chain is Large ribosomal subunit protein uL18, found in Desulfitobacterium hafniense (strain DSM 10664 / DCB-2).